We begin with the raw amino-acid sequence, 448 residues long: Probable D-serine dehydratase (448 aa).

Lysine 119 carries the post-translational modification N6-(pyridoxal phosphate)lysine.

It belongs to the serine/threonine dehydratase family. DsdA subfamily. It depends on pyridoxal 5'-phosphate as a cofactor.

The catalysed reaction is D-serine = pyruvate + NH4(+). This Chromobacterium violaceum (strain ATCC 12472 / DSM 30191 / JCM 1249 / CCUG 213 / NBRC 12614 / NCIMB 9131 / NCTC 9757 / MK) protein is Probable D-serine dehydratase.